A 408-amino-acid polypeptide reads, in one-letter code: RNA-splicing ligase RtcB (408 aa).

Residues Asp75, Cys78, His168, His185, and His281 each contribute to the Mn(2+) site. 167–171 is a GMP binding site; that stretch reads NHFIE. GMP is bound by residues 281–282, 313–316, Ser320, 337–340, and Lys407; these read HN, PGSM, and HGAG. His337 functions as the GMP-histidine intermediate in the catalytic mechanism.

It belongs to the RtcB family. In terms of assembly, monomer. Requires Mn(2+) as cofactor.

The catalysed reaction is a 3'-end 3'-phospho-ribonucleotide-RNA + a 5'-end dephospho-ribonucleoside-RNA + GTP = a ribonucleotidyl-ribonucleotide-RNA + GMP + diphosphate. It carries out the reaction a 3'-end 2',3'-cyclophospho-ribonucleotide-RNA + a 5'-end dephospho-ribonucleoside-RNA + GTP + H2O = a ribonucleotidyl-ribonucleotide-RNA + GMP + diphosphate + H(+). GTP-dependent RNA ligase that is involved in RNA repair. Joins RNA with 2',3'-cyclic-phosphate or 3'-phosphate ends to RNA with 5'-hydroxy ends. Also acts as a DNA ligase in case of DNA damage by splicing 'dirty' DNA breaks, characterized by 3'-phosphate (or cyclic-phosphate) and 5'-hydroxy ends that cannot be sealed by classical DNA ligases. Repairs tRNA cleaved by colicins D or E5, does not repair damaged 16S rRNA. Its function is as follows. Able to catalyze tRNA splicing in vivo in yeast, but bacteria are not known to splice tRNA. The chain is RNA-splicing ligase RtcB from Escherichia coli (strain K12).